Consider the following 400-residue polypeptide: Argininosuccinate synthase (400 aa).

ATP is bound by residues 10 to 18 (AYSGGVDTS) and A38. Residue Y89 coordinates L-citrulline. G119 is an ATP binding site. L-aspartate contacts are provided by T121, N125, and D126. N125 lines the L-citrulline pocket. R129, S177, S186, E262, and Y274 together coordinate L-citrulline.

It belongs to the argininosuccinate synthase family. Type 1 subfamily. In terms of assembly, homotetramer.

Its subcellular location is the cytoplasm. It catalyses the reaction L-citrulline + L-aspartate + ATP = 2-(N(omega)-L-arginino)succinate + AMP + diphosphate + H(+). The protein operates within amino-acid biosynthesis; L-arginine biosynthesis; L-arginine from L-ornithine and carbamoyl phosphate: step 2/3. With respect to regulation, activity decreases to 53.9% and 18.4% in the presence of 1 mM and 5 mM arginine, respectively. Activity also decreases to 80.1%, 78.1% and 92.1% in the presence of 5 mM ornithine, lysine and succinate, respectively. Activity does not decrease in the presence of glutamate, glutamine or asparagine. Catalyzes the condensation of citrulline and aspartate into argininosuccinate, the immediate precursor of arginine. SyArgG is the rate-limiting step in arginine biosynthesis in Synechocystis PCC 6803. The chain is Argininosuccinate synthase from Synechocystis sp. (strain ATCC 27184 / PCC 6803 / Kazusa).